A 75-amino-acid polypeptide reads, in one-letter code: Pro-glucagon (75 aa).

This sequence belongs to the glucagon family.

The protein localises to the secreted. Functionally, plays a key role in glucose metabolism and homeostasis. Regulates blood glucose by increasing gluconeogenesis and decreasing glycolysis. This is Pro-glucagon (gcg) from Amia calva (Bowfin).